We begin with the raw amino-acid sequence, 480 residues long: Glycogen synthase (480 aa).

Lys-15 lines the ADP-alpha-D-glucose pocket.

It belongs to the glycosyltransferase 1 family. Bacterial/plant glycogen synthase subfamily.

It carries out the reaction [(1-&gt;4)-alpha-D-glucosyl](n) + ADP-alpha-D-glucose = [(1-&gt;4)-alpha-D-glucosyl](n+1) + ADP + H(+). It participates in glycan biosynthesis; glycogen biosynthesis. Synthesizes alpha-1,4-glucan chains using ADP-glucose. This is Glycogen synthase from Pasteurella multocida (strain Pm70).